A 604-amino-acid polypeptide reads, in one-letter code: DNA polymerase alpha subunit B (604 aa).

The disordered stretch occupies residues Glu-109–Glu-171. Residues Asn-113–Ala-141 are compositionally biased toward polar residues. Thr-129 and Thr-132 each carry phosphothreonine. Phosphoserine occurs at positions 143, 149, 154, and 156. A compositionally biased stretch (low complexity) spans Ser-143 to Pro-160.

Belongs to the DNA polymerase alpha subunit B family. In terms of assembly, component of the alpha DNA polymerase complex (also known as the alpha DNA polymerase-primase complex) consisting of four subunits: the catalytic subunit POLA1, the regulatory subunit POLA2, and the primase complex subunits PRIM1 and PRIM2 respectively. Within the complex, POLA1 directly interacts with PRIM2. In terms of processing, phosphorylated in a cell cycle-dependent manner, in G2/M phase.

The protein localises to the nucleus. Its function is as follows. Accessory subunit of the DNA polymerase alpha complex (also known as the alpha DNA polymerase-primase complex) which plays an essential role in the initiation of DNA synthesis. During the S phase of the cell cycle, the DNA polymerase alpha complex (composed of a catalytic subunit POLA1, an accessory subunit POLA2 and two primase subunits, the catalytic subunit PRIM1 and the regulatory subunit PRIM2) is recruited to DNA at the replicative forks via direct interactions with MCM10 and WDHD1. The primase subunit of the polymerase alpha complex initiates DNA synthesis by oligomerising short RNA primers on both leading and lagging strands. These primers are initially extended by the polymerase alpha catalytic subunit and subsequently transferred to polymerase delta and polymerase epsilon for processive synthesis on the lagging and leading strand, respectively. The polypeptide is DNA polymerase alpha subunit B (POLA2) (Bos taurus (Bovine)).